The following is a 500-amino-acid chain: NAD(P)H-quinone oxidoreductase chain 4, chloroplastic (500 aa).

The next 15 helical transmembrane spans lie at 4 to 24 (LPWL…IPLF), 31 to 51 (IIRW…TYTF), 87 to 107 (IGPI…AWPV), 111 to 131 (PRLF…LFAS), 134 to 154 (ILLF…LISM), 167 to 187 (FILY…SMGL), 207 to 227 (VVLE…KLPI), 242 to 262 (HYST…YGLI), 274 to 294 (SLFS…AALT), 305 to 325 (IAYS…SMAD), 330 to 350 (GAIL…FLAG), 358 to 378 (TLFL…STMF), 386 to 406 (LALP…GIIT), 416 to 436 (IVIA…LLSM), and 462 to 482 (IFIS…PDLV).

It belongs to the complex I subunit 4 family.

The protein resides in the plastid. The protein localises to the chloroplast thylakoid membrane. It carries out the reaction a plastoquinone + NADH + (n+1) H(+)(in) = a plastoquinol + NAD(+) + n H(+)(out). The catalysed reaction is a plastoquinone + NADPH + (n+1) H(+)(in) = a plastoquinol + NADP(+) + n H(+)(out). The chain is NAD(P)H-quinone oxidoreductase chain 4, chloroplastic from Cycas taitungensis (Prince sago).